The primary structure comprises 880 residues: Leucine--tRNA ligase (880 aa).

A 'HIGH' region motif is present at residues 46–56 (PYPSGALHMGH). Residues 638-642 (KMSKS) carry the 'KMSKS' region motif. K641 lines the ATP pocket.

The protein belongs to the class-I aminoacyl-tRNA synthetase family.

Its subcellular location is the cytoplasm. It carries out the reaction tRNA(Leu) + L-leucine + ATP = L-leucyl-tRNA(Leu) + AMP + diphosphate. The polypeptide is Leucine--tRNA ligase (Xanthomonas oryzae pv. oryzae (strain KACC10331 / KXO85)).